Consider the following 216-residue polypeptide: 3-isopropylmalate dehydratase small subunit (216 aa).

It belongs to the LeuD family. LeuD type 1 subfamily. As to quaternary structure, heterodimer of LeuC and LeuD.

It carries out the reaction (2R,3S)-3-isopropylmalate = (2S)-2-isopropylmalate. It functions in the pathway amino-acid biosynthesis; L-leucine biosynthesis; L-leucine from 3-methyl-2-oxobutanoate: step 2/4. Functionally, catalyzes the isomerization between 2-isopropylmalate and 3-isopropylmalate, via the formation of 2-isopropylmaleate. The polypeptide is 3-isopropylmalate dehydratase small subunit (Methylibium petroleiphilum (strain ATCC BAA-1232 / LMG 22953 / PM1)).